A 175-amino-acid chain; its full sequence is NADH dehydrogenase [ubiquinone] iron-sulfur protein 4, mitochondrial (175 aa).

The N-terminal 42 residues, 1–42, are a transit peptide targeting the mitochondrion; that stretch reads MAAVSISVSLRQAMLGRRAMATAAVSVCRVPSRLLSTSTWKL. Position 173 is a phosphoserine (Ser173).

It belongs to the complex I NDUFS4 subunit family. This is a component of the iron-sulfur (IP) fragment of the enzyme. Interacts with BCAP31 and TOMM40; the interaction mediates its translocation to the mitochondria; the interaction with BCAP31 is direct.

The protein localises to the mitochondrion inner membrane. Accessory subunit of the mitochondrial membrane respiratory chain NADH dehydrogenase (Complex I), that is believed not to be involved in catalysis. Complex I functions in the transfer of electrons from NADH to the respiratory chain. The immediate electron acceptor for the enzyme is believed to be ubiquinone. The protein is NADH dehydrogenase [ubiquinone] iron-sulfur protein 4, mitochondrial (Ndufs4) of Mus musculus (Mouse).